The sequence spans 548 residues: Chaperonin GroEL (548 aa).

ATP contacts are provided by residues 30 to 33 (TLGP), K51, 87 to 91 (DGTTT), G415, 479 to 481 (NAA), and D495.

It belongs to the chaperonin (HSP60) family. Forms a cylinder of 14 subunits composed of two heptameric rings stacked back-to-back. Interacts with the co-chaperonin GroES.

Its subcellular location is the cytoplasm. It catalyses the reaction ATP + H2O + a folded polypeptide = ADP + phosphate + an unfolded polypeptide.. In terms of biological role, together with its co-chaperonin GroES, plays an essential role in assisting protein folding. The GroEL-GroES system forms a nano-cage that allows encapsulation of the non-native substrate proteins and provides a physical environment optimized to promote and accelerate protein folding. This is Chaperonin GroEL from Klebsiella pneumoniae subsp. pneumoniae (strain ATCC 700721 / MGH 78578).